We begin with the raw amino-acid sequence, 319 residues long: Ribosomal RNA small subunit methyltransferase H (319 aa).

Residues 39–41, Asp-59, Phe-83, Asp-104, and Gln-111 contribute to the S-adenosyl-L-methionine site; that span reads GGH.

The protein belongs to the methyltransferase superfamily. RsmH family.

The protein localises to the cytoplasm. The enzyme catalyses cytidine(1402) in 16S rRNA + S-adenosyl-L-methionine = N(4)-methylcytidine(1402) in 16S rRNA + S-adenosyl-L-homocysteine + H(+). In terms of biological role, specifically methylates the N4 position of cytidine in position 1402 (C1402) of 16S rRNA. The sequence is that of Ribosomal RNA small subunit methyltransferase H from Ralstonia nicotianae (strain ATCC BAA-1114 / GMI1000) (Ralstonia solanacearum).